The following is a 367-amino-acid chain: Undecaprenyl-phosphate alpha-N-acetylglucosaminyl 1-phosphate transferase (367 aa).

A run of 9 helical transmembrane segments spans residues 3-23, 45-65, 69-89, 129-149, 158-178, 187-207, 213-233, 242-262, and 318-338; these read LLTA…FIFL, GVIP…MFGL, YIPH…VGAM, WELV…WAAI, IDGL…LILW, MWCF…LGIL, VFMG…LLLE, ISPV…VAIM, and VPEW…GYCI.

Belongs to the glycosyltransferase 4 family. WecA subfamily. It depends on Mg(2+) as a cofactor. Mn(2+) is required as a cofactor.

It is found in the cell inner membrane. It carries out the reaction di-trans,octa-cis-undecaprenyl phosphate + UDP-N-acetyl-alpha-D-glucosamine = N-acetyl-alpha-D-glucosaminyl-di-trans,octa-cis-undecaprenyl diphosphate + UMP. The protein operates within bacterial outer membrane biogenesis; LPS O-antigen biosynthesis. Its pathway is bacterial outer membrane biogenesis; enterobacterial common antigen biosynthesis. Functionally, catalyzes the transfer of the GlcNAc-1-phosphate moiety from UDP-GlcNAc onto the carrier lipid undecaprenyl phosphate (C55-P), yielding GlcNAc-pyrophosphoryl-undecaprenyl (GlcNAc-PP-C55). The chain is Undecaprenyl-phosphate alpha-N-acetylglucosaminyl 1-phosphate transferase from Salmonella typhi.